The primary structure comprises 149 residues: Oligosaccharyltransferase complex subunit OSTC (149 aa).

Over methionine 1 to threonine 32 the chain is Cytoplasmic. The chain crosses the membrane as a helical span at residues valine 33 to isoleucine 53. The Extracellular portion of the chain corresponds to valine 54–tyrosine 83. Residues isoleucine 84–leucine 104 form a helical membrane-spanning segment. Over aspartate 105–arginine 117 the chain is Cytoplasmic. The chain crosses the membrane as a helical span at residues phenylalanine 118–phenylalanine 138. The Extracellular segment spans residues methionine 139–glycine 149.

It belongs to the OSTC family. Component of STT3A-containing oligosaccharyl transferase (OST-A) complex. STT3A-containing complex assembly occurs through the formation of 3 subcomplexes. Subcomplex 1 contains RPN1 and TMEM258, subcomplex 2 contains the STT3A-specific subunits STT3A, DC2/OSTC, and KCP2 as well as the core subunit OST4, and subcomplex 3 contains RPN2, DAD1, and OST48. The OST-A complex can form stable complexes with the Sec61 complex or with both the Sec61 and TRAP complexes. Interacts with PSEN1 and NCSTN; indicative for an association with the gamma-secretase complex.

It localises to the endoplasmic reticulum. Its subcellular location is the membrane. It participates in protein modification; protein glycosylation. Its function is as follows. Subunit of STT3A-containing oligosaccharyl transferase (OST-A) complex that catalyzes the initial transfer of a defined glycan (Glc(3)Man(9)GlcNAc(2) in eukaryotes) from the lipid carrier dolichol-pyrophosphate to an asparagine residue within an Asn-X-Ser/Thr consensus motif in nascent polypeptide chains, the first step in protein N-glycosylation. N-glycosylation occurs cotranslationally and the complex associates with the Sec61 complex at the channel-forming translocon complex that mediates protein translocation across the endoplasmic reticulum (ER). Within the OST-A complex, acts as an adapter that anchors the OST-A complex to the Sec61 complex. May be involved in N-glycosylation of APP (amyloid-beta precursor protein). Can modulate gamma-secretase cleavage of APP by enhancing endoprotelysis of PSEN1. The sequence is that of Oligosaccharyltransferase complex subunit OSTC from Canis lupus familiaris (Dog).